Reading from the N-terminus, the 225-residue chain is Small ribosomal subunit protein uS3 (225 aa).

A KH type-2 domain is found at 38 to 106; it reads LRKFLQGKLQ…EVSLNIVEIR (69 aa).

The protein belongs to the universal ribosomal protein uS3 family. Part of the 30S ribosomal subunit. Forms a tight complex with proteins S10 and S14.

Functionally, binds the lower part of the 30S subunit head. Binds mRNA in the 70S ribosome, positioning it for translation. The protein is Small ribosomal subunit protein uS3 of Rhodospirillum centenum (strain ATCC 51521 / SW).